The chain runs to 775 residues: Kojibiose phosphorylase (775 aa).

361–362 (WD) is a binding site for substrate. E501 (proton donor) is an active-site residue. 614 to 615 (KQ) lines the substrate pocket.

Belongs to the glycosyl hydrolase 65 family. As to quaternary structure, homohexamer.

It catalyses the reaction kojibiose + phosphate = beta-D-glucose 1-phosphate + D-glucose. Its activity is regulated as follows. Inhibited by Hg(2+) and Pb(2+). Its function is as follows. Catalyzes the reversible phosphorolysis of kojibiose into beta-D-glucose 1-phosphate (Glc1P) and D-glucose. Can act with alpha-1,2-oligoglucans, such as selaginose, but more slowly. Inactive when disaccharides with linkages other than alpha-1,2 linkages, such as sophorose, trehalose, neotrehalose, nigerose, laminaribiose, maltose, cellobiose, isomaltose, gentiobiose, sucrose and lactose, are used as substrates. In contrast, shows broad specificity for the reverse reaction. Various monosaccharides and disaccharides having a glucosyl residue at the non-reducing end are effective acceptors. The polypeptide is Kojibiose phosphorylase (Thermoanaerobacter brockii (Thermoanaerobium brockii)).